The primary structure comprises 1112 residues: DNA polymerase II large subunit (1112 aa).

This sequence belongs to the archaeal DNA polymerase II family. As to quaternary structure, heterodimer of a large subunit and a small subunit.

The catalysed reaction is DNA(n) + a 2'-deoxyribonucleoside 5'-triphosphate = DNA(n+1) + diphosphate. The enzyme catalyses Exonucleolytic cleavage in the 3'- to 5'-direction to yield nucleoside 5'-phosphates.. Functionally, possesses two activities: a DNA synthesis (polymerase) and an exonucleolytic activity that degrades single-stranded DNA in the 3'- to 5'-direction. Has a template-primer preference which is characteristic of a replicative DNA polymerase. This is DNA polymerase II large subunit from Cenarchaeum symbiosum (strain A).